Reading from the N-terminus, the 296-residue chain is Thymidylate synthase (296 aa).

DUMP contacts are provided by residues R23 and 157 to 158; that span reads RR. Catalysis depends on C177, which acts as the Nucleophile. DUMP-binding positions include 198 to 201, N209, and 239 to 241; these read RSAD and HIY. Residue D201 participates in (6R)-5,10-methylene-5,6,7,8-tetrahydrofolate binding. (6R)-5,10-methylene-5,6,7,8-tetrahydrofolate is bound at residue A295.

This sequence belongs to the thymidylate synthase family. Bacterial-type ThyA subfamily. As to quaternary structure, homodimer.

Its subcellular location is the cytoplasm. It catalyses the reaction dUMP + (6R)-5,10-methylene-5,6,7,8-tetrahydrofolate = 7,8-dihydrofolate + dTMP. Its pathway is pyrimidine metabolism; dTTP biosynthesis. In terms of biological role, catalyzes the reductive methylation of 2'-deoxyuridine-5'-monophosphate (dUMP) to 2'-deoxythymidine-5'-monophosphate (dTMP) while utilizing 5,10-methylenetetrahydrofolate (mTHF) as the methyl donor and reductant in the reaction, yielding dihydrofolate (DHF) as a by-product. This enzymatic reaction provides an intracellular de novo source of dTMP, an essential precursor for DNA biosynthesis. In Zymomonas mobilis subsp. mobilis (strain ATCC 31821 / ZM4 / CP4), this protein is Thymidylate synthase.